The chain runs to 88 residues: UPF0297 protein Cphy_2298 (88 aa).

It belongs to the UPF0297 family.

The protein is UPF0297 protein Cphy_2298 of Lachnoclostridium phytofermentans (strain ATCC 700394 / DSM 18823 / ISDg) (Clostridium phytofermentans).